We begin with the raw amino-acid sequence, 68 residues long: Large ribosomal subunit protein bL35 (68 aa).

Composition is skewed to basic residues over residues 1–11 (MPKLKTRSSAK) and 19–29 (SGKVKHGKAFA). Positions 1 to 54 (MPKLKTRSSAKKRFDVKKSGKVKHGKAFAKHLFTFSKTPKSKRSNRGTGHLRDM) are disordered.

This sequence belongs to the bacterial ribosomal protein bL35 family.

This chain is Large ribosomal subunit protein bL35, found in Myxococcus xanthus (strain DK1622).